Consider the following 170-residue polypeptide: Large ribosomal subunit protein uL11 (170 aa).

The protein belongs to the universal ribosomal protein uL11 family. As to quaternary structure, part of the ribosomal stalk of the 50S ribosomal subunit. Interacts with L10 and the large rRNA to form the base of the stalk. L10 forms an elongated spine to which L12 dimers bind in a sequential fashion forming a multimeric L10(L12)X complex.

Its function is as follows. Forms part of the ribosomal stalk which helps the ribosome interact with GTP-bound translation factors. This Saccharolobus solfataricus (strain ATCC 35092 / DSM 1617 / JCM 11322 / P2) (Sulfolobus solfataricus) protein is Large ribosomal subunit protein uL11.